Reading from the N-terminus, the 209-residue chain is Glycerol-3-phosphate acyltransferase (209 aa).

5 helical membrane-spanning segments follow: residues 8-28, 78-98, 124-144, 149-169, and 170-190; these read NVLF…YILA, VLVL…LIGI, VLLV…LIVA, ISSL…FIVH, and PDMP…IIFY.

It belongs to the PlsY family. Probably interacts with PlsX.

It is found in the cell inner membrane. The enzyme catalyses an acyl phosphate + sn-glycerol 3-phosphate = a 1-acyl-sn-glycero-3-phosphate + phosphate. The protein operates within lipid metabolism; phospholipid metabolism. In terms of biological role, catalyzes the transfer of an acyl group from acyl-phosphate (acyl-PO(4)) to glycerol-3-phosphate (G3P) to form lysophosphatidic acid (LPA). This enzyme utilizes acyl-phosphate as fatty acyl donor, but not acyl-CoA or acyl-ACP. The protein is Glycerol-3-phosphate acyltransferase of Nitratiruptor sp. (strain SB155-2).